Reading from the N-terminus, the 114-residue chain is UPF0342 protein lp_1415 (114 aa).

It belongs to the UPF0342 family.

The protein is UPF0342 protein lp_1415 of Lactiplantibacillus plantarum (strain ATCC BAA-793 / NCIMB 8826 / WCFS1) (Lactobacillus plantarum).